The chain runs to 100 residues: Small ribosomal subunit protein uS14c (100 aa).

The protein belongs to the universal ribosomal protein uS14 family. Part of the 30S ribosomal subunit.

Its subcellular location is the plastid. The protein resides in the chloroplast. In terms of biological role, binds 16S rRNA, required for the assembly of 30S particles. The chain is Small ribosomal subunit protein uS14c from Aethionema cordifolium (Lebanon stonecress).